The following is a 400-amino-acid chain: uncharacterized protein (400 aa).

The protein to M.jannaschii MJ1544 and MJ1637.

This is an uncharacterized protein from Haemophilus influenzae (strain ATCC 51907 / DSM 11121 / KW20 / Rd).